Reading from the N-terminus, the 125-residue chain is Holo-[acyl-carrier-protein] synthase (125 aa).

Mg(2+)-binding residues include Asp-8 and Glu-57.

The protein belongs to the P-Pant transferase superfamily. AcpS family. Requires Mg(2+) as cofactor.

The protein resides in the cytoplasm. The catalysed reaction is apo-[ACP] + CoA = holo-[ACP] + adenosine 3',5'-bisphosphate + H(+). Functionally, transfers the 4'-phosphopantetheine moiety from coenzyme A to a Ser of acyl-carrier-protein. The protein is Holo-[acyl-carrier-protein] synthase of Neisseria gonorrhoeae (strain ATCC 700825 / FA 1090).